A 729-amino-acid chain; its full sequence is DNA topoisomerase 3 (729 aa).

The region spanning 3-136 (KSVVIAEKPS…IKRLWISSVT (134 aa)) is the Toprim domain. Residues glutamate 9 and aspartate 105 each coordinate Mg(2+). Residues 153-594 (YDNLYASAVA…EMKNYTKEIV (442 aa)) form the Topo IA-type catalytic domain. An interaction with DNA region spans residues 187–192 (NCGRVQ). Tyrosine 310 serves as the catalytic O-(5'-phospho-DNA)-tyrosine intermediate. Over residues 686-713 (ERRKKESGNKADKRDVQKYMKQQKKEEE) the composition is skewed to basic and acidic residues. Residues 686 to 718 (ERRKKESGNKADKRDVQKYMKQQKKEEEPLNNP) form a disordered region.

Belongs to the type IA topoisomerase family. Mg(2+) serves as cofactor.

The enzyme catalyses ATP-independent breakage of single-stranded DNA, followed by passage and rejoining.. Functionally, releases the supercoiling and torsional tension of DNA, which is introduced during the DNA replication and transcription, by transiently cleaving and rejoining one strand of the DNA duplex. Introduces a single-strand break via transesterification at a target site in duplex DNA. The scissile phosphodiester is attacked by the catalytic tyrosine of the enzyme, resulting in the formation of a DNA-(5'-phosphotyrosyl)-enzyme intermediate and the expulsion of a 3'-OH DNA strand. The free DNA strand then undergoes passage around the unbroken strand, thus removing DNA supercoils. Finally, in the religation step, the DNA 3'-OH attacks the covalent intermediate to expel the active-site tyrosine and restore the DNA phosphodiester backbone. This chain is DNA topoisomerase 3, found in Bacillus cereus (strain ATCC 10987 / NRS 248).